The following is a 69-amino-acid chain: Cytochrome c oxidase subunit 8A, mitochondrial (69 aa).

The N-terminal 25 residues, 1–25 (MSVLTPLLLRGLTGSARRLPMPCAR), are a transit peptide targeting the mitochondrion. An SIFI-degron motif is present at residues 2–19 (SVLTPLLLRGLTGSARRL). Topologically, residues 26-36 (VHSKPPREQLG) are mitochondrial matrix. The chain crosses the membrane as a helical span at residues 37-60 (TMDIAIGLTSCFVCFLLPSGWVLS). Topologically, residues 61 to 69 (HLENYKKRE) are mitochondrial intermembrane.

This sequence belongs to the cytochrome c oxidase VIII family. In terms of assembly, component of the cytochrome c oxidase (complex IV, CIV), a multisubunit enzyme composed of 14 subunits. The complex is composed of a catalytic core of 3 subunits MT-CO1, MT-CO2 and MT-CO3, encoded in the mitochondrial DNA, and 11 supernumerary subunits COX4I, COX5A, COX5B, COX6A, COX6B, COX6C, COX7A, COX7B, COX7C, COX8 and NDUFA4, which are encoded in the nuclear genome. The complex exists as a monomer or a dimer and forms supercomplexes (SCs) in the inner mitochondrial membrane with NADH-ubiquinone oxidoreductase (complex I, CI) and ubiquinol-cytochrome c oxidoreductase (cytochrome b-c1 complex, complex III, CIII), resulting in different assemblies (supercomplex SCI(1)III(2)IV(1) and megacomplex MCI(2)III(2)IV(2)). Post-translationally, in response to mitochondrial stress, the precursor protein is ubiquitinated by the SIFI complex in the cytoplasm before mitochondrial import, leading to its degradation. Within the SIFI complex, UBR4 initiates ubiquitin chain that are further elongated or branched by KCMF1.

The protein localises to the mitochondrion inner membrane. It functions in the pathway energy metabolism; oxidative phosphorylation. Component of the cytochrome c oxidase, the last enzyme in the mitochondrial electron transport chain which drives oxidative phosphorylation. The respiratory chain contains 3 multisubunit complexes succinate dehydrogenase (complex II, CII), ubiquinol-cytochrome c oxidoreductase (cytochrome b-c1 complex, complex III, CIII) and cytochrome c oxidase (complex IV, CIV), that cooperate to transfer electrons derived from NADH and succinate to molecular oxygen, creating an electrochemical gradient over the inner membrane that drives transmembrane transport and the ATP synthase. Cytochrome c oxidase is the component of the respiratory chain that catalyzes the reduction of oxygen to water. Electrons originating from reduced cytochrome c in the intermembrane space (IMS) are transferred via the dinuclear copper A center (CU(A)) of subunit 2 and heme A of subunit 1 to the active site in subunit 1, a binuclear center (BNC) formed by heme A3 and copper B (CU(B)). The BNC reduces molecular oxygen to 2 water molecules using 4 electrons from cytochrome c in the IMS and 4 protons from the mitochondrial matrix. The protein is Cytochrome c oxidase subunit 8A, mitochondrial (COX8A) of Nycticebus coucang (Slow loris).